A 134-amino-acid chain; its full sequence is Small ribosomal subunit protein uS8c (134 aa).

Belongs to the universal ribosomal protein uS8 family. Part of the 30S ribosomal subunit.

It localises to the plastid. Its subcellular location is the chloroplast. In terms of biological role, one of the primary rRNA binding proteins, it binds directly to 16S rRNA central domain where it helps coordinate assembly of the platform of the 30S subunit. This Glycine max (Soybean) protein is Small ribosomal subunit protein uS8c (rps8).